The sequence spans 1011 residues: Vacuolar membrane protease (1011 aa).

The Cytoplasmic portion of the chain corresponds to 1–9 (MSNPFAFRS). Residues 10 to 30 (AQVTFWTTVVYLALLVPLVVI) traverse the membrane as a helical segment. At 31 to 378 (NEGVPPVQPD…TFVLFGLRGM (348 aa)) the chain is on the vacuolar side. 2 N-linked (GlcNAc...) asparagine glycosylation sites follow: asparagine 50 and asparagine 106. Zn(2+) contacts are provided by histidine 159 and aspartate 171. The Proton acceptor role is filled by glutamate 205. Residues glutamate 206, glutamate 231, and histidine 304 each coordinate Zn(2+). Asparagine 331 carries N-linked (GlcNAc...) asparagine glycosylation. The chain crosses the membrane as a helical span at residues 379–399 (FAWSLTVLIVGPLTLFGMMYL). Over 400–439 (VHKQGKGYAFHTKLRATSDSSSEDGDDEDGEVIRLGGWKG) the chain is Cytoplasmic. Residues 440-460 (FFRFPFALIVAGALVTGAALL) traverse the membrane as a helical segment. At 461–471 (LRKMNPFIIYS) the chain is on the vacuolar side. A helical membrane pass occupies residues 472 to 492 (SEYAVWAMMISLFYFGFWLIM). Residues 493 to 505 (RGSSYTRPSALHR) are Cytoplasmic-facing. Residues 506–526 (LYVHIWLFILGWVALVFATVL) form a helical membrane-spanning segment. Residues 527 to 536 (EDRMRIASGY) are Vacuolar-facing. A helical membrane pass occupies residues 537 to 557 (IFVFWESQVFLATLVAVCELF). Residues 558–682 (SLPRKIDFAR…WSGPMVTSTW (125 aa)) are Cytoplasmic-facing. Polar residues predominate over residues 595–609 (EATSPQRAGQSSNSP). 2 disordered regions span residues 595-627 (EATS…LFRK) and 650-671 (IMDS…EGEQ). Residues 610–622 (QEDDEDDVPDEET) show a composition bias toward acidic residues. The helical transmembrane segment at 683–703 (ILQFLLLGPFMVILGGQVGLL) threads the bilayer. The Vacuolar segment spans residues 704-719 (LTSAVNQTGVDGSSLL). Asparagine 709 carries N-linked (GlcNAc...) asparagine glycosylation. Residues 720–740 (APYLMIAALSAILLMPLSPFI) form a helical membrane-spanning segment. The Cytoplasmic segment spans residues 741–747 (HRVTKHV). The chain crosses the membrane as a helical span at residues 748–768 (PLFLLAVAFATLIYSLVAFPF). Residues 769–1011 (SPRAPYKTFF…LVEGSKAFKV (243 aa)) are Vacuolar-facing. Asparagine 872 carries N-linked (GlcNAc...) asparagine glycosylation.

It belongs to the peptidase M28 family. It depends on Zn(2+) as a cofactor.

The protein localises to the vacuole membrane. Its function is as follows. May be involved in vacuolar sorting and osmoregulation. This is Vacuolar membrane protease from Pyricularia oryzae (strain 70-15 / ATCC MYA-4617 / FGSC 8958) (Rice blast fungus).